A 389-amino-acid polypeptide reads, in one-letter code: Capsule polysaccharide export protein KpsS (389 aa).

The chain is Capsule polysaccharide export protein KpsS (kpsS) from Escherichia coli.